The sequence spans 554 residues: Germacrene A synthase (554 aa).

Mg(2+)-binding residues include aspartate 306, aspartate 310, threonine 453, and glutamate 457. Positions aspartate 306 to aspartate 310 match the DDXXD motif motif.

Belongs to the terpene synthase family. The cofactor is Mg(2+).

The protein resides in the cytoplasm. It is found in the cytosol. It catalyses the reaction (2E,6E)-farnesyl diphosphate = (+)-(R)-germacrene A + diphosphate. Its pathway is secondary metabolite biosynthesis; terpenoid biosynthesis. Functionally, sesquiterpene synthase involved in germacrene A biosynthesis. Also produces additional sesquiterpene products, including 4,5-di-epi-aristolochene, eremophilene, alpha-selinene. This Pogostemon cablin (Patchouli) protein is Germacrene A synthase.